We begin with the raw amino-acid sequence, 812 residues long: Eukaryotic translation initiation factor 3 subunit C (812 aa).

Residues 1–105 are disordered; sequence MSRFFSRGYH…SDESDDEGKK (105 aa). Acidic residues-rich tracts occupy residues 17 to 40 and 48 to 59; these read SEDE…EVVS and SESESAESDDDS. The 177-residue stretch at 607-783 folds into the PCI domain; it reads FHQHINLDLI…EMLIFDKGDE (177 aa).

This sequence belongs to the eIF-3 subunit C family. As to quaternary structure, component of the eukaryotic translation initiation factor 3 (eIF-3) complex.

The protein localises to the cytoplasm. Functionally, component of the eukaryotic translation initiation factor 3 (eIF-3) complex, which is involved in protein synthesis of a specialized repertoire of mRNAs and, together with other initiation factors, stimulates binding of mRNA and methionyl-tRNAi to the 40S ribosome. The eIF-3 complex specifically targets and initiates translation of a subset of mRNAs involved in cell proliferation. The polypeptide is Eukaryotic translation initiation factor 3 subunit C (Eremothecium gossypii (strain ATCC 10895 / CBS 109.51 / FGSC 9923 / NRRL Y-1056) (Yeast)).